Here is a 367-residue protein sequence, read N- to C-terminus: Dual-specificity RNA methyltransferase RlmN (367 aa).

Glu-93 acts as the Proton acceptor in catalysis. The region spanning 99–333 (EEDRATLCVS…VIVRKTRGDD (235 aa)) is the Radical SAM core domain. Cys-106 and Cys-338 are joined by a disulfide. [4Fe-4S] cluster-binding residues include Cys-113, Cys-117, and Cys-120. Residues 162–163 (GE), Ser-194, 216–218 (SLH), and Asn-295 each bind S-adenosyl-L-methionine. The S-methylcysteine intermediate role is filled by Cys-338.

The protein belongs to the radical SAM superfamily. RlmN family. [4Fe-4S] cluster is required as a cofactor.

The protein localises to the cytoplasm. It catalyses the reaction adenosine(2503) in 23S rRNA + 2 reduced [2Fe-2S]-[ferredoxin] + 2 S-adenosyl-L-methionine = 2-methyladenosine(2503) in 23S rRNA + 5'-deoxyadenosine + L-methionine + 2 oxidized [2Fe-2S]-[ferredoxin] + S-adenosyl-L-homocysteine. The enzyme catalyses adenosine(37) in tRNA + 2 reduced [2Fe-2S]-[ferredoxin] + 2 S-adenosyl-L-methionine = 2-methyladenosine(37) in tRNA + 5'-deoxyadenosine + L-methionine + 2 oxidized [2Fe-2S]-[ferredoxin] + S-adenosyl-L-homocysteine. Specifically methylates position 2 of adenine 2503 in 23S rRNA and position 2 of adenine 37 in tRNAs. m2A2503 modification seems to play a crucial role in the proofreading step occurring at the peptidyl transferase center and thus would serve to optimize ribosomal fidelity. The sequence is that of Dual-specificity RNA methyltransferase RlmN from Aeromonas hydrophila subsp. hydrophila (strain ATCC 7966 / DSM 30187 / BCRC 13018 / CCUG 14551 / JCM 1027 / KCTC 2358 / NCIMB 9240 / NCTC 8049).